The following is a 123-amino-acid chain: Prismalin-14 (123 aa).

The first 16 residues, 1–16 (MRSLLVLLALAACASA), serve as a signal peptide directing secretion.

Prismatic layer of shell (at protein level). Expressed primarily in the mantle with highest level in the mantle edge and lower level in the mantle pallium.

It localises to the secreted. In terms of biological role, may be involved in calcification of the prismatic layer of the shell. In Margaritifera margaritifera (Freshwater pearl mussel), this protein is Prismalin-14.